The primary structure comprises 179 residues: CDP-archaeol synthase (179 aa).

The next 4 helical transmembrane spans lie at 53 to 73 (FVGG…IEKL), 88 to 108 (FTLT…GSFI), 120 to 140 (FLIV…SLYP), and 145 to 165 (LFTA…HMGI).

The protein belongs to the CDP-archaeol synthase family. Requires Mg(2+) as cofactor.

The protein localises to the cell membrane. The catalysed reaction is 2,3-bis-O-(geranylgeranyl)-sn-glycerol 1-phosphate + CTP + H(+) = CDP-2,3-bis-O-(geranylgeranyl)-sn-glycerol + diphosphate. Its pathway is membrane lipid metabolism; glycerophospholipid metabolism. Functionally, catalyzes the formation of CDP-2,3-bis-(O-geranylgeranyl)-sn-glycerol (CDP-archaeol) from 2,3-bis-(O-geranylgeranyl)-sn-glycerol 1-phosphate (DGGGP) and CTP. This reaction is the third ether-bond-formation step in the biosynthesis of archaeal membrane lipids. Can use CTP or dCTP, but not ATP, GTP or TTP. The polypeptide is CDP-archaeol synthase (Archaeoglobus fulgidus (strain ATCC 49558 / DSM 4304 / JCM 9628 / NBRC 100126 / VC-16)).